The primary structure comprises 307 residues: Aspartate carbamoyltransferase catalytic subunit (307 aa).

Residues Arg59 and Thr60 each contribute to the carbamoyl phosphate site. Lys87 contributes to the L-aspartate binding site. Positions 109, 137, and 140 each coordinate carbamoyl phosphate. Residues Arg173 and Arg223 each contribute to the L-aspartate site. Gly266 and Pro267 together coordinate carbamoyl phosphate.

It belongs to the aspartate/ornithine carbamoyltransferase superfamily. ATCase family. Heterododecamer (2C3:3R2) of six catalytic PyrB chains organized as two trimers (C3), and six regulatory PyrI chains organized as three dimers (R2).

The catalysed reaction is carbamoyl phosphate + L-aspartate = N-carbamoyl-L-aspartate + phosphate + H(+). Its pathway is pyrimidine metabolism; UMP biosynthesis via de novo pathway; (S)-dihydroorotate from bicarbonate: step 2/3. In terms of biological role, catalyzes the condensation of carbamoyl phosphate and aspartate to form carbamoyl aspartate and inorganic phosphate, the committed step in the de novo pyrimidine nucleotide biosynthesis pathway. This is Aspartate carbamoyltransferase catalytic subunit from Helicobacter pylori (strain G27).